A 106-amino-acid chain; its full sequence is RxLR effector protein PSR1 (106 aa).

The first 20 residues, 1–20 (MRLTYVLLVAVTTLLVSCDA), serve as a signal peptide directing secretion. Residues 33–46 (RLLRFVEAADEEER) carry the RxLR-dEER motif. Residues 50-106 (FSPEKLRKMLGDETYRLKKFGKWDSDGHTFDGLKHYLLLSDSSMVKLRNMYKAWLEQ) form a WY domain region. The Bipartite nuclear localization signal (NLS) signature appears at 56–69 (RKMLGDETYRLKKF).

Belongs to the RxLR effector family. Interacts with host PINP1.

The protein localises to the secreted. It is found in the host nucleus. Secreted effector that possesses RNA silencing suppression activity by inhibiting the biogenesis of small RNAs in the host plant to promote enhanced susceptibility of host to the pathogen during infection. Interferes with secondary siRNA production by associating with host nuclear protein PINP1 that acts as a regulator of the accumulation of both microRNAs and endogenous small interfering RNAs. The polypeptide is RxLR effector protein PSR1 (Phytophthora sojae (Soybean stem and root rot agent)).